Here is a 554-residue protein sequence, read N- to C-terminus: Myo-inositol transporter 1 (554 aa).

Over residues 1–13 the composition is skewed to polar residues; the sequence is MGSSTNNTQSKAT. Residues 1–57 form a disordered region; it reads MGSSTNNTQSKATPSVLENEVNSSKSSVVSSTSSAKGLLRETTNHGTMETSSVQISE. N-linked (GlcNAc...) asparagine glycans are attached at residues asparagine 6 and asparagine 22. Positions 15 to 34 are enriched in low complexity; the sequence is SVLENEVNSSKSSVVSSTSS. A compositionally biased stretch (polar residues) spans 44 to 57; it reads NHGTMETSSVQISE. Helical transmembrane passes span 65 to 85, 110 to 130, 144 to 164, 167 to 187, 196 to 216, and 227 to 247; these read MVLV…YDTG, FITS…GVLA, IIFV…TMIA, FVLG…ISEL, LIVT…FINW, and VSVG…WFLP. Asparagine 279 carries N-linked (GlcNAc...) asparagine glycosylation. The helical transmembrane segment at 313–332 threads the bilayer; sequence GNFRALILACGLQGIQQFTG. The N-linked (GlcNAc...) asparagine glycan is linked to asparagine 351. 5 helical membrane passes run 354–374, 382–402, 420–440, 459–479, and 490–510; these read AVSI…ICII, ILLV…VAFH, GWGI…AIGI, IGAM…ASTF, and GTFS…YFLL.

Belongs to the major facilitator superfamily. Sugar transporter (TC 2.A.1.1) family.

Its subcellular location is the cell membrane. The enzyme catalyses myo-inositol(out) + H(+)(out) = myo-inositol(in) + H(+)(in). Major transporter for myo-inositol. The chain is Myo-inositol transporter 1 from Candida albicans (strain SC5314 / ATCC MYA-2876) (Yeast).